A 125-amino-acid chain; its full sequence is Large ribosomal subunit protein bL12 (125 aa).

This sequence belongs to the bacterial ribosomal protein bL12 family. In terms of assembly, homodimer. Part of the ribosomal stalk of the 50S ribosomal subunit. Forms a multimeric L10(L12)X complex, where L10 forms an elongated spine to which 2 to 4 L12 dimers bind in a sequential fashion. Binds GTP-bound translation factors.

Forms part of the ribosomal stalk which helps the ribosome interact with GTP-bound translation factors. Is thus essential for accurate translation. This chain is Large ribosomal subunit protein bL12, found in Rickettsia typhi (strain ATCC VR-144 / Wilmington).